Here is a 63-residue protein sequence, read N- to C-terminus: Large ribosomal subunit protein uL29 (63 aa).

This sequence belongs to the universal ribosomal protein uL29 family.

This chain is Large ribosomal subunit protein uL29, found in Tolumonas auensis (strain DSM 9187 / NBRC 110442 / TA 4).